Here is a 228-residue protein sequence, read N- to C-terminus: Cytochrome c oxidase subunit 2 (228 aa).

Residues 1–26 (MATWANLGLQNSSSPLMEQLNFFHDH) are Mitochondrial intermembrane-facing. Residues 27-48 (TVLILIMITVMITYVMGMLFFN) traverse the membrane as a helical segment. At 49–62 (KFTNRYLLHGQTIE) the chain is on the mitochondrial matrix side. Residues 63-82 (IIWTILPAIILMFIAFPSLR) form a helical membrane-spanning segment. The Mitochondrial intermembrane segment spans residues 83–228 (LLYLLDEINS…FIKWVSSQLN (146 aa)). Residues His-161, Cys-196, Glu-198, Cys-200, His-204, and Met-207 each coordinate Cu cation. Glu-198 provides a ligand contact to Mg(2+).

It belongs to the cytochrome c oxidase subunit 2 family. As to quaternary structure, component of the cytochrome c oxidase (complex IV, CIV), a multisubunit enzyme composed of a catalytic core of 3 subunits and several supernumerary subunits. The complex exists as a monomer or a dimer and forms supercomplexes (SCs) in the inner mitochondrial membrane with ubiquinol-cytochrome c oxidoreductase (cytochrome b-c1 complex, complex III, CIII). The cofactor is Cu cation.

The protein localises to the mitochondrion inner membrane. The enzyme catalyses 4 Fe(II)-[cytochrome c] + O2 + 8 H(+)(in) = 4 Fe(III)-[cytochrome c] + 2 H2O + 4 H(+)(out). Functionally, component of the cytochrome c oxidase, the last enzyme in the mitochondrial electron transport chain which drives oxidative phosphorylation. The respiratory chain contains 3 multisubunit complexes succinate dehydrogenase (complex II, CII), ubiquinol-cytochrome c oxidoreductase (cytochrome b-c1 complex, complex III, CIII) and cytochrome c oxidase (complex IV, CIV), that cooperate to transfer electrons derived from NADH and succinate to molecular oxygen, creating an electrochemical gradient over the inner membrane that drives transmembrane transport and the ATP synthase. Cytochrome c oxidase is the component of the respiratory chain that catalyzes the reduction of oxygen to water. Electrons originating from reduced cytochrome c in the intermembrane space (IMS) are transferred via the dinuclear copper A center (CU(A)) of subunit 2 and heme A of subunit 1 to the active site in subunit 1, a binuclear center (BNC) formed by heme A3 and copper B (CU(B)). The BNC reduces molecular oxygen to 2 water molecules using 4 electrons from cytochrome c in the IMS and 4 protons from the mitochondrial matrix. This Culex quinquefasciatus (Southern house mosquito) protein is Cytochrome c oxidase subunit 2 (COII).